A 595-amino-acid polypeptide reads, in one-letter code: Putative capsid protein V20 (595 aa).

Its subcellular location is the virion. May self assemble to form an icosahedral capsid. Most abundant protein in the virion. The chain is Putative capsid protein V20 from Sputnik virophage.